The chain runs to 381 residues: Cytochrome b (381 aa).

Transmembrane regions (helical) follow at residues 33-53 (FGSL…FLAM), 77-98 (WLLR…FLHV), 113-133 (WNIG…GYVL), and 178-198 (FFAF…VHLL). Heme b-binding residues include H83 and H97. Residues H182 and H196 each coordinate heme b. H201 provides a ligand contact to a ubiquinone. A run of 4 helical transmembrane segments spans residues 226 to 246 (IKDA…ALFS), 288 to 308 (LGGV…PLLH), 320 to 340 (ISQT…WIGG), and 347 to 367 (FIII…VLMP).

The protein belongs to the cytochrome b family. As to quaternary structure, the cytochrome bc1 complex contains 11 subunits: 3 respiratory subunits (MT-CYB, CYC1 and UQCRFS1), 2 core proteins (UQCRC1 and UQCRC2) and 6 low-molecular weight proteins (UQCRH/QCR6, UQCRB/QCR7, UQCRQ/QCR8, UQCR10/QCR9, UQCR11/QCR10 and a cleavage product of UQCRFS1). This cytochrome bc1 complex then forms a dimer. Heme b is required as a cofactor.

The protein localises to the mitochondrion inner membrane. Functionally, component of the ubiquinol-cytochrome c reductase complex (complex III or cytochrome b-c1 complex) that is part of the mitochondrial respiratory chain. The b-c1 complex mediates electron transfer from ubiquinol to cytochrome c. Contributes to the generation of a proton gradient across the mitochondrial membrane that is then used for ATP synthesis. The protein is Cytochrome b (MT-CYB) of Pseudantechinus bilarni (Sandstone dibbler).